A 203-amino-acid polypeptide reads, in one-letter code: NAD(P)H dehydrogenase (quinone) (203 aa).

The Flavodoxin-like domain occupies 3-194 (VLIAYYSMYG…AAARYQGKHV (192 aa)). Residues 9–14 (SMYGHI) and 82–84 (TRF) contribute to the FMN site. Position 11 (Tyr-11) interacts with NAD(+). Trp-102 contacts substrate. FMN-binding positions include 117–123 (SSATQHG) and His-138.

The protein belongs to the WrbA family. FMN is required as a cofactor.

It catalyses the reaction a quinone + NADH + H(+) = a quinol + NAD(+). The catalysed reaction is a quinone + NADPH + H(+) = a quinol + NADP(+). This is NAD(P)H dehydrogenase (quinone) from Geotalea uraniireducens (strain Rf4) (Geobacter uraniireducens).